The primary structure comprises 245 residues: Putative insertion sequence ATP-binding protein y4pL (245 aa).

106–113 contacts ATP; sequence GPSGVGKS.

This sequence belongs to the IS21/IS1162 putative ATP-binding protein family.

This is Putative insertion sequence ATP-binding protein y4pL from Sinorhizobium fredii (strain NBRC 101917 / NGR234).